The following is a 485-amino-acid chain: Glutamate--tRNA ligase (485 aa).

Residues 12–22 carry the 'HIGH' region motif; the sequence is PSPTGYMHIGN. The 'KMSKS' region motif lies at 253 to 257; it reads KLSKR. Lys-256 is a binding site for ATP.

This sequence belongs to the class-I aminoacyl-tRNA synthetase family. Glutamate--tRNA ligase type 1 subfamily. As to quaternary structure, monomer.

The protein resides in the cytoplasm. The catalysed reaction is tRNA(Glu) + L-glutamate + ATP = L-glutamyl-tRNA(Glu) + AMP + diphosphate. Its function is as follows. Catalyzes the attachment of glutamate to tRNA(Glu) in a two-step reaction: glutamate is first activated by ATP to form Glu-AMP and then transferred to the acceptor end of tRNA(Glu). This is Glutamate--tRNA ligase from Clostridium acetobutylicum (strain ATCC 824 / DSM 792 / JCM 1419 / IAM 19013 / LMG 5710 / NBRC 13948 / NRRL B-527 / VKM B-1787 / 2291 / W).